Here is a 387-residue protein sequence, read N- to C-terminus: Phosphoglycerate kinase (387 aa).

Substrate contacts are provided by residues 21-23 (DLN), Arg36, 59-62 (HLGR), Arg113, and Arg146. Residues Lys197, Glu314, and 340–343 (GGDT) contribute to the ATP site.

The protein belongs to the phosphoglycerate kinase family. As to quaternary structure, monomer.

It is found in the cytoplasm. The enzyme catalyses (2R)-3-phosphoglycerate + ATP = (2R)-3-phospho-glyceroyl phosphate + ADP. It participates in carbohydrate degradation; glycolysis; pyruvate from D-glyceraldehyde 3-phosphate: step 2/5. The protein is Phosphoglycerate kinase of Pseudomonas putida (strain GB-1).